We begin with the raw amino-acid sequence, 238 residues long: Orotidine 5'-phosphate decarboxylase (238 aa).

Residues Asp-10, Lys-32, 59-68, Thr-122, Arg-184, Gln-193, Gly-213, and Arg-214 each bind substrate; that span reads DLKLHDIPNT. The active-site Proton donor is Lys-61.

It belongs to the OMP decarboxylase family. Type 1 subfamily. In terms of assembly, homodimer.

The enzyme catalyses orotidine 5'-phosphate + H(+) = UMP + CO2. It functions in the pathway pyrimidine metabolism; UMP biosynthesis via de novo pathway; UMP from orotate: step 2/2. In terms of biological role, catalyzes the decarboxylation of orotidine 5'-monophosphate (OMP) to uridine 5'-monophosphate (UMP). In Bacillus anthracis (strain A0248), this protein is Orotidine 5'-phosphate decarboxylase.